A 551-amino-acid polypeptide reads, in one-letter code: MTMNETTSSLLEPDRDWWRGAVIYQIYPRSFQDTNGDGIGDLQGITARLPHIAGLGADAIWISPFFTSPMRDFGYDVSNYVDVDPIFGTLEDFDALIAEAHRLGLRVMIDLVLSHTSDRHPWFVESRSSRSNAKADWYVWADSKPDGTPPNNWLSIFGGSAWQWDPTRLQYYLHNFLTSQPDLNLHNPQVQEALLAVERFWLERGVDGFRLDTINFYFHDRELRDNPALVPERRNASTAPAVNPYNYQEHIYDKNRPENLEFLKRFRAVMDEFPAIAAVGEVGDSQRGLEIAGEYTSGGDKVHMCYAFEFLAPDRLTPQRVAEVLRDFHRAAPEGWACWAFSNHDVVRHVSRWADGVTDHDAHAKLLASLLMSLRGTVCIYQGEELALAEAELDYEDLQDPYGIQFWPDFKGRDGCRTPMVWESLPDGGFSSATPWLPISQSHIPRAVAVQEGDPASVLHHYRRFLAFRKANPALAKGEIEFVETRGSLLGFLRSHGNEKVFCLFNMSDEAATKELPMKRLEPLEGHGFVSEILDHEVKLPAWGAFFARLA.

Catalysis depends on D212, which acts as the Nucleophile. E272 functions as the Proton donor in the catalytic mechanism.

This sequence belongs to the glycosyl hydrolase 13 family.

The catalysed reaction is Hydrolysis of terminal, non-reducing (1-&gt;4)-linked alpha-D-glucose residues with release of alpha-D-glucose.. The chain is Probable alpha-glucosidase (aglA) from Rhizobium meliloti (strain 1021) (Ensifer meliloti).